We begin with the raw amino-acid sequence, 304 residues long: Secreted mono- and diacylglycerol lipase MDL2 (304 aa).

A signal peptide spans 1 to 19 (MILGRTISLFLGCSALVSG). An intrachain disulfide couples C55 to C297. N-linked (GlcNAc...) asparagine glycosylation is found at N102 and N161. The Nucleophile role is filled by S171. D228 is a catalytic residue. The N-linked (GlcNAc...) asparagine glycan is linked to N253. Residue H281 is part of the active site.

It belongs to the AB hydrolase superfamily. Lipase family. Class 3 subfamily.

It is found in the secreted. The protein localises to the cell wall. The enzyme catalyses a monoacylglycerol + H2O = glycerol + a fatty acid + H(+). The catalysed reaction is a diacylglycerol + H2O = a monoacylglycerol + a fatty acid + H(+). Secreted lipase involved in Dandruff and seborrheic dermatitis (D/SD) probably via lipase-mediated breakdown of sebaceous lipids and release of irritating free fatty acids. Shows activity against monoglyceride and diglyceride substrates, but not triglyceride substrates and does not exhibit regio-selective production of diacylglycerols. Hydrolyzes both 1,2- and 1,3-diacylglycerols. Also hydrolyzes distearin, dilinolein and dipalmitolein. Cleaves oleic acid from 1,2 isomers of diolein on both the 1 and the 2 position of the glycerol backbone, resulting mainly in free fatty acids but no monoolein is detected. Shows activity on monoolein and liberates mostly free fatty acids, but can also perform the reverse reaction and produce diolein. This Malassezia globosa (strain ATCC MYA-4612 / CBS 7966) (Dandruff-associated fungus) protein is Secreted mono- and diacylglycerol lipase MDL2.